Here is a 268-residue protein sequence, read N- to C-terminus: Acidic leucine-rich nuclear phosphoprotein 32 family member E (268 aa).

Met1 carries the N-acetylmethionine modification. LRR repeat units follow at residues 18 to 38, 43 to 64, 65 to 87, and 89 to 110; these read EVTELVLDNCLCVNGEIEGLN, ELEFLSMANVELSSLARLPSLN, KLRKLELSDNIISGGLEVLAEKC, and NLTYLNLSGNKIKDLSTVEALQ. Lys68 participates in a covalent cross-link: Glycyl lysine isopeptide (Lys-Gly) (interchain with G-Cter in SUMO2). Residues 123–161 form the LRRCT domain; it reads CEITNLEDYRESIFELLQQITYLDGFDQEDNEAPDSEEE. Composition is skewed to acidic residues over residues 149–216 and 226–247; these read DQED…EEEV and IQDEEDDDDYVEEGEEEEEEEE. The tract at residues 149-268 is disordered; sequence DQEDNEAPDS…AEDDGEEEDD (120 aa). Residues 215 to 268 are ZID domain; the sequence is EVGLSYLMKEEIQDEEDDDDYVEEGEEEEEEEEGGLRGEKRKRDAEDDGEEEDD. Positions 248–259 are enriched in basic and acidic residues; the sequence is GGLRGEKRKRDA.

The protein belongs to the ANP32 family. In terms of assembly, interacts with the importin alpha KPNA1 and KPNA2. Component of a SWR1-like complex, composed of EP400, KAT5/TIP60, TRRAP, BRD8, RUVBL1, RUVBL2, ING3 and ANP32E; the complex does not contain SRCAP. Interacts with H2A.Z/H2AZ1. Phosphorylated. The phosphorylation is nuclear localization signal (NLS)-dependent. Expressed in peripheral blood leukocytes, colon, small intestine, prostate, thymus, spleen, skeletal muscle, liver and kidney.

Its subcellular location is the cytoplasm. The protein localises to the nucleus. Histone chaperone that specifically mediates the genome-wide removal of histone H2A.Z/H2AZ1 from the nucleosome: removes H2A.Z/H2AZ1 from its normal sites of deposition, especially from enhancer and insulator regions. Not involved in deposition of H2A.Z/H2AZ1 in the nucleosome. May stabilize the evicted H2A.Z/H2AZ1-H2B dimer, thus shifting the equilibrium towards dissociation and the off-chromatin state. Inhibits activity of protein phosphatase 2A (PP2A). Does not inhibit protein phosphatase 1. May play a role in cerebellar development and synaptogenesis. The chain is Acidic leucine-rich nuclear phosphoprotein 32 family member E (ANP32E) from Homo sapiens (Human).